A 139-amino-acid polypeptide reads, in one-letter code: Inactive palmitoleoyl-protein carboxylesterase notum1b (139 aa).

Belongs to the pectinacetylesterase family. Notum subfamily.

Functionally, probable inactive palmitoleoyl-protein carboxylesterase. The polypeptide is Inactive palmitoleoyl-protein carboxylesterase notum1b (Danio rerio (Zebrafish)).